Reading from the N-terminus, the 205-residue chain is Deoxyuridine 5'-triphosphate nucleotidohydrolase (205 aa).

The residue at position 54 (S54) is a Phosphoserine. Substrate-binding positions include 126–128, 140–143, G151, and 199–200; these read RSG, GVID, and FG.

It belongs to the dUTPase family. Homotrimer. Mg(2+) serves as cofactor. Expressed in all tissues examined. Higher levels in heart and kidney.

It localises to the cytoplasm. The protein resides in the nucleus. The enzyme catalyses dUTP + H2O = dUMP + diphosphate + H(+). The protein operates within pyrimidine metabolism; dUMP biosynthesis; dUMP from dCTP (dUTP route): step 2/2. Its function is as follows. Catalyzes the cleavage of 2'-deoxyuridine 5'-triphosphate (dUTP) into 2'-deoxyuridine 5'-monophosphate (dUMP) and inorganic pyrophosphate and through its action efficiently prevents uracil misincorporation into DNA and at the same time provides dUMP, the substrate for de novo thymidylate biosynthesis. Inhibits peroxisome proliferator-activated receptor (PPAR) activity by binding of its N-terminal to PPAR, preventing the latter's dimerization with retinoid X receptor. Essential for embryonic development. The protein is Deoxyuridine 5'-triphosphate nucleotidohydrolase (Dut) of Rattus norvegicus (Rat).